The sequence spans 455 residues: Keratin, type I cuticular Ha5 (455 aa).

A head region spans residues 1-97; sequence MASKCLKASF…FGEGILTGNE (97 aa). An IF rod domain is found at 97–408; that stretch reads EKETMQSLND…GLLESEDSKL (312 aa). Residues 98 to 132 are coil 1A; the sequence is KETMQSLNDRLASYLEKVRQLEQENASLESRIREW. A linker 1 region spans residues 133–143; it reads CEQQVPYMCPD. The segment at 144–244 is coil 1B; sequence YQSYFRTMEE…HEEEVNSLRC (101 aa). Residues 245–260 form a linker 12 region; it reads QLGDRLNVEVDAAPPV. The segment at 261-404 is coil 2; that stretch reads DLNRVLDEMR…NTYRGLLESE (144 aa). The segment at 405–455 is tail; that stretch reads DSKLPCNPCAPDYSSSKSCLPCLPAVSCSTGAARTTCSPRPVCVPCPGGRF.

Belongs to the intermediate filament family.

In Mus musculus (Mouse), this protein is Keratin, type I cuticular Ha5.